Reading from the N-terminus, the 394-residue chain is Outer membrane protein S1 (394 aa).

Positions M1–A21 are cleaved as a signal peptide. The segment at S222–R242 is disordered.

It belongs to the Gram-negative porin family. As to quaternary structure, homotrimer.

The protein localises to the cell outer membrane. Forms pores that allow passive diffusion of small molecules across the outer membrane. The protein is Outer membrane protein S1 (ompS1) of Salmonella typhi.